Consider the following 322-residue polypeptide: Phthalate dioxygenase reductase (322 aa).

The FAD-binding FR-type domain maps to 7–109 (DGFLRLKIAS…SLPRNEFPLD (103 aa)). Residues 56–57 (RT), 73–75 (AVK), 81–84 (RGGS), Thr-125, and Phe-226 contribute to the FMN site. One can recognise a 2Fe-2S ferredoxin-type domain in the interval 239-322 (FTVRLSRSGT…AKSAELVLDL (84 aa)). Residue Cys-273 coordinates [2Fe-2S] cluster. Ser-275 provides a ligand contact to FMN. 3 residues coordinate [2Fe-2S] cluster: Cys-278, Cys-281, and Cys-309.

This sequence belongs to the PDR/VanB family. As to quaternary structure, monomer. FMN is required as a cofactor.

Functionally, component of the electron transfer chain involved in pyridine nucleotide-dependent dihydroxylation of phthalate. Utilizes FMN to mediate electron transfer from the two-electron donor, NADH, to the one-electron acceptor, (2Fe-2S). In Burkholderia cepacia (Pseudomonas cepacia), this protein is Phthalate dioxygenase reductase (ophA1).